Consider the following 77-residue polypeptide: Putative defensin-like protein 158 (77 aa).

The first 24 residues, 1–24 (MANISWSHFLILMLVFSVVKKGKG), serve as a signal peptide directing secretion. Disulfide bonds link cysteine 31–cysteine 77, cysteine 41–cysteine 60, cysteine 46–cysteine 71, and cysteine 50–cysteine 73.

Belongs to the DEFL family.

It localises to the secreted. This chain is Putative defensin-like protein 158 (LCR23), found in Arabidopsis thaliana (Mouse-ear cress).